Here is an 823-residue protein sequence, read N- to C-terminus: Axial budding pattern protein 2 (823 aa).

An N-terminal signal peptide occupies residues 1–22; it reads MTQLQISLLLTATISLLHLVVA. Over 23-508 the chain is Extracellular; sequence TPYEAYPIGK…SHNKKAVAIA (486 aa). N-linked (GlcNAc...) asparagine glycosylation is found at asparagine 41, asparagine 50, asparagine 96, asparagine 117, asparagine 163, asparagine 260, asparagine 266, asparagine 304, asparagine 324, asparagine 359, asparagine 382, asparagine 389, asparagine 403, asparagine 447, asparagine 451, and asparagine 495. Positions 447 to 467 are disordered; it reads NHSANATSTRSSHHSTSTSSY. Low complexity predominate over residues 449 to 467; the sequence is SANATSTRSSHHSTSTSSY. A helical transmembrane segment spans residues 509–529; the sequence is CGVAIPLGVILVALICFLIFW. Residues 530 to 823 are Cytoplasmic-facing; it reads RRRRENPDDE…DIHGRIPEML (294 aa). Disordered regions lie at residues 539–576 and 596–627; these read ENLP…ASSY and HSAT…QSQS. 2 stretches are compositionally biased toward polar residues: residues 552 to 566 and 614 to 626; these read NPAN…TPLN and SGMN…FQSQ. Serine 642, serine 673, and serine 676 each carry phosphoserine. Disordered regions lie at residues 700 to 734 and 751 to 771; these read PEKE…VTPS and DSQS…SSDD. Residues 709 to 724 show a composition bias toward polar residues; that stretch reads DVTMSSLDPWNSNISP. A compositionally biased stretch (low complexity) spans 760-769; it reads TPTTMSTSSS.

As to quaternary structure, interacts with BEM1, BUD3, BUD4, BUD5, CDC24 and CDC42. O-glycosylated by PMT4 and N-glycosylated. O-glycosylation increases activity in daughter cells by enhancing stability and promoting localization to the plasma membrane. May also be O-glycosylated by PMT1 and PMT2.

It localises to the cell membrane. In terms of biological role, required for haploid cells axial budding pattern. Acts as an anchor to help direct new growth components and/or polarity establishment components like the BUD5 GTP/GDP exchange factor to localize at the cortical axial budding site. Regulates septin organization in late G1 independently of its role in polarity-axis determination. This chain is Axial budding pattern protein 2 (AXL2), found in Saccharomyces cerevisiae (strain ATCC 204508 / S288c) (Baker's yeast).